The chain runs to 138 residues: Basic phospholipase A2 homolog bothropstoxin-II (138 aa).

The N-terminal stretch at 1–16 (MRTLWIMAVLLVGVEG) is a signal peptide. Cystine bridges form between Cys-42/Cys-131, Cys-44/Cys-60, Cys-59/Cys-111, Cys-65/Cys-138, Cys-66/Cys-104, Cys-73/Cys-97, and Cys-91/Cys-102. Positions 121-133 (KRYMAYPDVLCKK) are important for membrane-damaging activities in eukaryotes and bacteria; heparin-binding.

This sequence belongs to the phospholipase A2 family. Group II subfamily. D49 sub-subfamily. As to quaternary structure, homodimer; non-covalently linked (probable alternative/compact dimer conformation). Expressed by the venom gland.

Its subcellular location is the secreted. Its function is as follows. Snake venom phospholipase A2 (PLA2) that shows low enzymatic activity even tough it conserves the catalytic residues. Shows a strong myotoxic activity and induces indirect hemolysis, anticoagulant properties, and cytotoxic activities. In vivo, it induces muscle necrosis, accompanied by polymorphonuclear cell infiltration, and edema in the mouse paw. It exerts its function even in the absence of extracellular calcium, indicating it is not a calcium-dependent enzyme. A model of myotoxic mechanism has been proposed: an apo Lys49-PLA2 is activated by the entrance of a hydrophobic molecule (e.g. fatty acid) at the hydrophobic channel of the protein leading to a reorientation of a monomer. This reorientation causes a transition between 'inactive' to 'active' states, causing alignment of C-terminal and membrane-docking sites (MDoS) side-by-side and putting the membrane-disruption sites (MDiS) in the same plane, exposed to solvent and in a symmetric position for both monomers. The MDoS region stabilizes the toxin on membrane by the interaction of charged residues with phospholipid head groups. Subsequently, the MDiS region destabilizes the membrane with penetration of hydrophobic residues. This insertion causes a disorganization of the membrane, allowing an uncontrolled influx of ions (i.e. calcium and sodium), and eventually triggering irreversible intracellular alterations and cell death. This Bothrops jararacussu (Jararacussu) protein is Basic phospholipase A2 homolog bothropstoxin-II.